Consider the following 100-residue polypeptide: Phosphoribosyl-ATP pyrophosphatase (100 aa).

This sequence belongs to the PRA-PH family.

The protein resides in the cytoplasm. The enzyme catalyses 1-(5-phospho-beta-D-ribosyl)-ATP + H2O = 1-(5-phospho-beta-D-ribosyl)-5'-AMP + diphosphate + H(+). It participates in amino-acid biosynthesis; L-histidine biosynthesis; L-histidine from 5-phospho-alpha-D-ribose 1-diphosphate: step 2/9. The polypeptide is Phosphoribosyl-ATP pyrophosphatase (hisE) (Methanopyrus kandleri (strain AV19 / DSM 6324 / JCM 9639 / NBRC 100938)).